We begin with the raw amino-acid sequence, 181 residues long: Peptide deformylase 2 (181 aa).

2 residues coordinate Fe cation: cysteine 109 and histidine 151. Residue glutamate 152 is part of the active site. Histidine 155 serves as a coordination point for Fe cation.

This sequence belongs to the polypeptide deformylase family. It depends on Fe(2+) as a cofactor.

The enzyme catalyses N-terminal N-formyl-L-methionyl-[peptide] + H2O = N-terminal L-methionyl-[peptide] + formate. Its function is as follows. Removes the formyl group from the N-terminal Met of newly synthesized proteins. Requires at least a dipeptide for an efficient rate of reaction. N-terminal L-methionine is a prerequisite for activity but the enzyme has broad specificity at other positions. In Shewanella oneidensis (strain ATCC 700550 / JCM 31522 / CIP 106686 / LMG 19005 / NCIMB 14063 / MR-1), this protein is Peptide deformylase 2.